A 270-amino-acid chain; its full sequence is Acyl-[acyl-carrier-protein]--UDP-N-acetylglucosamine O-acyltransferase (270 aa).

The protein belongs to the transferase hexapeptide repeat family. LpxA subfamily. Homotrimer.

It localises to the cytoplasm. It catalyses the reaction a (3R)-hydroxyacyl-[ACP] + UDP-N-acetyl-alpha-D-glucosamine = a UDP-3-O-[(3R)-3-hydroxyacyl]-N-acetyl-alpha-D-glucosamine + holo-[ACP]. Its pathway is glycolipid biosynthesis; lipid IV(A) biosynthesis; lipid IV(A) from (3R)-3-hydroxytetradecanoyl-[acyl-carrier-protein] and UDP-N-acetyl-alpha-D-glucosamine: step 1/6. Involved in the biosynthesis of lipid A, a phosphorylated glycolipid that anchors the lipopolysaccharide to the outer membrane of the cell. The sequence is that of Acyl-[acyl-carrier-protein]--UDP-N-acetylglucosamine O-acyltransferase from Sinorhizobium medicae (strain WSM419) (Ensifer medicae).